A 299-amino-acid polypeptide reads, in one-letter code: Fibrinogen silencer-binding protein (299 aa).

A Glycyl lysine isopeptide (Lys-Gly) (interchain with G-Cter in SUMO2) cross-link involves residue K94.

In terms of assembly, interacts with APBA1 (via PDZ 1 and 2 domains). Expressed in multiple tissues including brain.

The protein resides in the nucleus. Transcriptional repressor that down-regulates the expression of the fibrinogen gamma chain. Represses transcription of GSK3B gene promoter via its interaction with APBA1. This Homo sapiens (Human) protein is Fibrinogen silencer-binding protein (FSBP).